Here is a 608-residue protein sequence, read N- to C-terminus: Rap1 GTPase-GDP dissociation stimulator 1 (608 aa).

ARM repeat units lie at residues 89-131 (GLIS…DQAG) and 171-212 (DSLQ…NLAE). The segment at 122–171 (EGRSAVDQAGGAQIVVDHLRSLCSKTDPASEKLLTVFCGMLMNYSNEKND) is prevents binding to prenylated RHOA. Lys231 bears the N6-acetyllysine mark. 3 ARM repeats span residues 348-391 (DGNC…NLAI), 392-432 (PVVN…MLID), and 480-520 (SKDV…LIAA).

In terms of assembly, interacts with RABL3. Interacts with RHOT1. As to quaternary structure, interacts with unprenylated RHOA; the interaction is direct. Interacts with RAP1A. Interacts with KRAS. Interacts with RAC1. Interacts with RAP1B. Preferentially interacts with unprenylated GTPases that will become geranylgeranylated. May also interact with prenylated GTPases. Interacts with prenylated RHOA; the interaction is direct and in a 1:1 stoichiometry. Interacts with RAP1A. Interacts with KRAS. Interacts with RAC1. Interacts with RAP1B. Preferentially interacts with prenylated GTPases. Post-translationally, the N-terminus is blocked. In terms of processing, forms covalent cross-links mediated by transglutaminase TGM2, between a glutamine and the epsilon-amino group of a lysine residue, forming homopolymers and heteropolymers. Brain.

The protein resides in the cytoplasm. The protein localises to the cytosol. It is found in the endoplasmic reticulum. It localises to the mitochondrion. Its subcellular location is the nucleus. Functionally, acts as a GEF (guanine nucleotide exchange factor) for the Rho family of small GTP-binding proteins (G proteins) that stimulates the dissociation of GDP to enable subsequent binding of GTP. Additionally, appears to chaperone the processing and/or trafficking of small GTPases containing a C-terminal polybasic region independently of GEF activity. Targets include RAP1A/RAP1B, RHOA, RHOB, RHOC, RAC1 and KRAS. Regulates mitochondrial dynamics by controlling RHOT function to promote mitochondrial fission during high calcium conditions. Able to promote the Ca(2+) release from the endoplasmic reticulum via both inositol trisphosphate (Ins3P) and ryanodine sensitive receptors leading to a enhanced mitochondrial Ca(2+) uptake. Its function is as follows. Acts as a GEF (guanine nucleotide exchange factor) for unprenylated RHOA. Chaperones the entry and passage of small GTPases through the prenylation pathway. Recognizes the last amino acid in the GTPase C-terminal CAAX motif with a preference for 'Leu' over 'Met', indicating involvement in the geranylgeranylation pathway. May also recognize prenylated GTPases. In terms of biological role, acts as a GEF (guanine nucleotide exchange factor) for prenylated RHOA. Acts as a GEF for RHOC. Chaperones the downstream trafficking and/or processing of small newly prenylated GTPases. Escorts RAC1 to the nucleus. This is Rap1 GTPase-GDP dissociation stimulator 1 (RAP1GDS1) from Bos taurus (Bovine).